We begin with the raw amino-acid sequence, 576 residues long: Formate--tetrahydrofolate ligase 1 (576 aa).

Thr69 to Thr76 is an ATP binding site.

The protein belongs to the formate--tetrahydrofolate ligase family.

The catalysed reaction is (6S)-5,6,7,8-tetrahydrofolate + formate + ATP = (6R)-10-formyltetrahydrofolate + ADP + phosphate. It functions in the pathway one-carbon metabolism; tetrahydrofolate interconversion. This chain is Formate--tetrahydrofolate ligase 1, found in Rubrobacter xylanophilus (strain DSM 9941 / JCM 11954 / NBRC 16129 / PRD-1).